A 318-amino-acid chain; its full sequence is tRNA-modifying protein YgfZ (318 aa).

The folate site is built by Trp-28 and Trp-182.

The protein belongs to the tRNA-modifying YgfZ family.

Its subcellular location is the cytoplasm. Its function is as follows. Folate-binding protein involved in regulating the level of ATP-DnaA and in the modification of some tRNAs. It is probably a key factor in regulatory networks that act via tRNA modification, such as initiation of chromosomal replication. The chain is tRNA-modifying protein YgfZ from Aliivibrio fischeri (strain ATCC 700601 / ES114) (Vibrio fischeri).